The sequence spans 557 residues: Urocanate hydratase (557 aa).

NAD(+)-binding positions include 53–54 (GG), Gln-131, 177–179 (GMG), Glu-197, Arg-202, 243–244 (NA), 264–268 (QTSAH), 274–275 (YL), and Tyr-323. The active site involves Cys-411. Gly-493 contributes to the NAD(+) binding site.

The protein belongs to the urocanase family. It depends on NAD(+) as a cofactor.

The protein resides in the cytoplasm. The catalysed reaction is 4-imidazolone-5-propanoate = trans-urocanate + H2O. It functions in the pathway amino-acid degradation; L-histidine degradation into L-glutamate; N-formimidoyl-L-glutamate from L-histidine: step 2/3. Catalyzes the conversion of urocanate to 4-imidazolone-5-propionate. The protein is Urocanate hydratase of Pseudomonas entomophila (strain L48).